A 1206-amino-acid polypeptide reads, in one-letter code: Cilia- and flagella-associated protein 157 (1206 aa).

Disordered regions lie at residues 26-52, 79-109, 125-173, and 327-405; these read GGGGGSAAAAAMQEEQGEQEGPTGRDL, RAEQEHPQEGRPQQQEQGGEARQEQQGQQAP, EATC…RGPL, and GSGK…EEDW. 3 stretches are compositionally biased toward low complexity: residues 88–109, 156–173, and 385–397; these read GRPQQQEQGGEARQEQQGQQAP, AKAVARGPRGAGTARGPL, and QQLGEQPGEQPGG. Coiled coils occupy residues 634-732, 799-833, and 876-903; these read TDEL…KTKD, TEKLLNKNNKLMEENAELRRQLELSKQTEEELARR, and LHLAQLQLEEKSAEADALRERLESKTAE. 3 disordered regions span residues 936–990, 1011–1072, and 1168–1206; these read TTTN…DELS, LSHG…GATS, and PWGKRSEQQPLTTTKHSGTFLRKGNGPSNNTGSRGSLKV. Composition is skewed to low complexity over residues 951–973 and 1014–1035; these read AGADAAGGSRSGSPTPPGASSSA and GPLSQSSPAPLSAGGMGSALAG. Gly residues-rich tracts occupy residues 1037–1046 and 1058–1067; these read WGPGSPGGSR and SAGGMGGPQG. Polar residues-rich tracts occupy residues 1175-1184 and 1193-1206; these read QQPLTTTKHS and GPSNNTGSRGSLKV.

This sequence belongs to the CFAP157 family.

It localises to the cell projection. It is found in the cilium. The protein resides in the flagellum. This is Cilia- and flagella-associated protein 157 from Chlamydomonas reinhardtii (Chlamydomonas smithii).